The primary structure comprises 533 residues: Suppressor of cytokine signaling 6 (533 aa).

Disordered regions lie at residues 54 to 136 (CDIG…WPLR) and 177 to 199 (ELRD…PGDL). The segment covering 59–69 (EDEKGKNRSKS) has biased composition (basic and acidic residues). The span at 76–88 (LKRRLSAKQKTKG) shows a compositional bias: basic residues. The span at 177-189 (ELRDLQPEPRPES) shows a compositional bias: basic and acidic residues. The 108-residue stretch at 382–489 (WYWGPITRWE…TYPVRLTNPV (108 aa)) folds into the SH2 domain. Positions 484–533 (RLTNPVSRFMQVRSLQYLCRFVIRQYTRIDLIQKLPLPNKMKDYLQEKHY) constitute an SOCS box domain.

In terms of assembly, interacts with KIT (phosphorylated). Interacts with RBCK1. Interacts with phosphorylated IRS4. Interacts with PIM3.

It participates in protein modification; protein ubiquitination. Functionally, SOCS family proteins form part of a classical negative feedback system that regulates cytokine signal transduction. May be a substrate recognition component of a SCF-like ECS (Elongin BC-CUL2/5-SOCS-box protein) E3 ubiquitin-protein ligase complex which mediates the ubiquitination and subsequent proteasomal degradation of target proteins. Regulates KIT degradation by ubiquitination of the tyrosine-phosphorylated receptor. The polypeptide is Suppressor of cytokine signaling 6 (Socs6) (Mus musculus (Mouse)).